A 528-amino-acid polypeptide reads, in one-letter code: Probable feruloyl esterase B-1 (528 aa).

A signal peptide spans 1–19 (MMWWFLLIGLASAAATASS). Disulfide bonds link Cys-29–Cys-78, Cys-64–Cys-117, Cys-190–Cys-445, Cys-259–Cys-276, Cys-285–Cys-295, and Cys-505–Cys-527. Residues Asn-83 and Asn-101 are each glycosylated (N-linked (GlcNAc...) asparagine). Ser-191 serves as the catalytic Acyl-ester intermediate. The Ca(2+) site is built by Asp-260, Asp-263, Ala-265, Asp-267, and Ile-269. N-linked (GlcNAc...) asparagine glycosylation is found at Asn-286, Asn-354, and Asn-385. Active-site charge relay system residues include Asp-404 and His-444.

Belongs to the tannase family.

The protein resides in the secreted. The catalysed reaction is feruloyl-polysaccharide + H2O = ferulate + polysaccharide.. Its function is as follows. Involved in degradation of plant cell walls. Hydrolyzes the feruloyl-arabinose ester bond in arabinoxylans as well as the feruloyl-galactose and feruloyl-arabinose ester bonds in pectin. The sequence is that of Probable feruloyl esterase B-1 (faeB-1) from Aspergillus fumigatus (strain CBS 144.89 / FGSC A1163 / CEA10) (Neosartorya fumigata).